A 257-amino-acid chain; its full sequence is Putative aldolase class 2 protein CC_1201 (257 aa).

Zn(2+) contacts are provided by His114, His116, and His177.

This sequence belongs to the aldolase class II family. Requires Zn(2+) as cofactor.

This chain is Putative aldolase class 2 protein CC_1201, found in Caulobacter vibrioides (strain ATCC 19089 / CIP 103742 / CB 15) (Caulobacter crescentus).